A 225-amino-acid polypeptide reads, in one-letter code: Small ribosomal subunit protein uS3 (225 aa).

The region spanning 39 to 109 is the KH type-2 domain; it reads IYRFFNKFTR…ELKLNIEVVN (71 aa).

It belongs to the universal ribosomal protein uS3 family. As to quaternary structure, part of the 30S ribosomal subunit. Forms a tight complex with proteins S10 and S14.

Functionally, binds the lower part of the 30S subunit head. Binds mRNA in the 70S ribosome, positioning it for translation. This is Small ribosomal subunit protein uS3 from Mycoplasma mobile (strain ATCC 43663 / 163K / NCTC 11711) (Mesomycoplasma mobile).